Reading from the N-terminus, the 180-residue chain is MKLVLVSTRGVRSLNSTNFPAPWPFVKKGAFGQRKIGPMNYEKFKWPGQNREFPELSPKFQKLNPKELHRYTGVQADGFHDEKTGEFVPVKEMRSELVVPNLDGFKLRPYVSYRTDVQIEKRRVAYEKKVLEKGSERLADLHTVEDERWPPPKMSAETLFELAYGDTVRSAYKEGKYGNK.

The transit peptide at 1-21 (MKLVLVSTRGVRSLNSTNFPA) directs the protein to the mitochondrion.

It belongs to the mitochondrion-specific ribosomal protein mL41 family. Component of the mitochondrial ribosome large subunit (39S) which comprises a 16S rRNA and about 50 distinct proteins.

It is found in the mitochondrion. The chain is Large ribosomal subunit protein mL41 (mrpl-41) from Caenorhabditis elegans.